The chain runs to 416 residues: Histone acetyltransferase type B catalytic subunit (416 aa).

Ala2 is subject to N-acetylalanine. Residues Lys6 and Lys12 each carry the N6-acetyllysine modification. An interaction with histone H4 N-terminus region spans residues 59–61 (DDE). The residue at position 187 (Ser187) is a Phosphoserine. Residues 222–224 (YNY) form an interaction with histone H4 N-terminus region. Acetyl-CoA is bound by residues 238-240 (MLI) and 245-251 (QGQGHGA). The active-site Proton donor/acceptor is Glu273. Ser340 is modified (phosphoserine).

This sequence belongs to the HAT1 family. In terms of assembly, catalytic subunit of the type B histone acetyltransferase (HAT) complex, composed of RBBP7 and HAT1. Interacts with histones H4 and H2A. The interaction is dependent of the ability of RBBP7 to bind to the N-terminus of histones. Component of the histone H3.1 and H3.3 complexes. Phosphorylated by AMPK at Ser-187; phosphorylation increases HAT1 activity.

Its subcellular location is the nucleus matrix. The protein resides in the mitochondrion. It carries out the reaction L-lysyl-[protein] + acetyl-CoA = N(6)-acetyl-L-lysyl-[protein] + CoA + H(+). Its function is as follows. Histone acetyltransferase that plays a role in different biological processes including cell cycle progression, glucose metabolism, histone production or DNA damage repair. Coordinates histone production and acetylation via H4 promoter binding. Acetylates histone H4 at 'Lys-5' (H4K5ac) and 'Lys-12' (H4K12ac) and, to a lesser extent, histone H2A at 'Lys-5' (H2AK5ac). Drives H4 production by chromatin binding to support chromatin replication and acetylation. Since transcription of H4 genes is tightly coupled to S-phase, plays an important role in S-phase entry and progression. Promotes homologous recombination in DNA repair by facilitating histone turnover and incorporation of acetylated H3.3 at sites of double-strand breaks. In addition, acetylates other substrates such as chromatin-related proteins. Also acetylates RSAD2 which mediates the interaction of ubiquitin ligase UBE4A with RSAD2 leading to RSAD2 ubiquitination and subsequent degradation. The polypeptide is Histone acetyltransferase type B catalytic subunit (Hat1) (Mus musculus (Mouse)).